A 506-amino-acid polypeptide reads, in one-letter code: Probable malate:quinone oxidoreductase (506 aa).

This sequence belongs to the MQO family. Requires FAD as cofactor.

It carries out the reaction (S)-malate + a quinone = a quinol + oxaloacetate. Its pathway is carbohydrate metabolism; tricarboxylic acid cycle; oxaloacetate from (S)-malate (quinone route): step 1/1. The sequence is that of Probable malate:quinone oxidoreductase from Rhodococcus jostii (strain RHA1).